We begin with the raw amino-acid sequence, 354 residues long: UDP-N-acetylglucosamine--N-acetylmuramyl-(pentapeptide) pyrophosphoryl-undecaprenol N-acetylglucosamine transferase (354 aa).

UDP-N-acetyl-alpha-D-glucosamine is bound by residues 11-13, Arg164, Ser194, and Gln289; that span reads TAG.

Belongs to the glycosyltransferase 28 family. MurG subfamily.

It is found in the cell membrane. It carries out the reaction di-trans,octa-cis-undecaprenyl diphospho-N-acetyl-alpha-D-muramoyl-L-alanyl-D-glutamyl-meso-2,6-diaminopimeloyl-D-alanyl-D-alanine + UDP-N-acetyl-alpha-D-glucosamine = di-trans,octa-cis-undecaprenyl diphospho-[N-acetyl-alpha-D-glucosaminyl-(1-&gt;4)]-N-acetyl-alpha-D-muramoyl-L-alanyl-D-glutamyl-meso-2,6-diaminopimeloyl-D-alanyl-D-alanine + UDP + H(+). It participates in cell wall biogenesis; peptidoglycan biosynthesis. In terms of biological role, cell wall formation. Catalyzes the transfer of a GlcNAc subunit on undecaprenyl-pyrophosphoryl-MurNAc-pentapeptide (lipid intermediate I) to form undecaprenyl-pyrophosphoryl-MurNAc-(pentapeptide)GlcNAc (lipid intermediate II). The sequence is that of UDP-N-acetylglucosamine--N-acetylmuramyl-(pentapeptide) pyrophosphoryl-undecaprenol N-acetylglucosamine transferase from Lachnospira eligens (strain ATCC 27750 / DSM 3376 / VPI C15-48 / C15-B4) (Eubacterium eligens).